The sequence spans 158 residues: Lipoprotein signal peptidase (158 aa).

The next 4 helical transmembrane spans lie at 7-27 (LFWIAAFIAFFVDQLTKYWVV), 38-58 (ILPGIFHFTYVTNTGAAFSLF), 67-87 (WLSLGVSLLLIGLALLGPVLD), and 95-115 (GLILGGAMGNGIDRFALGYVV). Active-site residues include aspartate 116 and aspartate 132. A helical membrane pass occupies residues 125 to 145 (FAVFNMADSFISIGIVCLLLA).

The protein belongs to the peptidase A8 family.

Its subcellular location is the cell inner membrane. It carries out the reaction Release of signal peptides from bacterial membrane prolipoproteins. Hydrolyzes -Xaa-Yaa-Zaa-|-(S,diacylglyceryl)Cys-, in which Xaa is hydrophobic (preferably Leu), and Yaa (Ala or Ser) and Zaa (Gly or Ala) have small, neutral side chains.. It functions in the pathway protein modification; lipoprotein biosynthesis (signal peptide cleavage). Functionally, this protein specifically catalyzes the removal of signal peptides from prolipoproteins. This is Lipoprotein signal peptidase from Nostoc sp. (strain PCC 7120 / SAG 25.82 / UTEX 2576).